We begin with the raw amino-acid sequence, 826 residues long: Leucine--tRNA ligase (826 aa).

A 'HIGH' region motif is present at residues 41-51 (PYPSGKLHMGH). A 'KMSKS' region motif is present at residues 586–590 (KMSKS). An ATP-binding site is contributed by Lys-589.

It belongs to the class-I aminoacyl-tRNA synthetase family.

The protein localises to the cytoplasm. It catalyses the reaction tRNA(Leu) + L-leucine + ATP = L-leucyl-tRNA(Leu) + AMP + diphosphate. The chain is Leucine--tRNA ligase from Natranaerobius thermophilus (strain ATCC BAA-1301 / DSM 18059 / JW/NM-WN-LF).